The primary structure comprises 422 residues: Histidine--tRNA ligase (422 aa).

This sequence belongs to the class-II aminoacyl-tRNA synthetase family. Homodimer.

It is found in the cytoplasm. It carries out the reaction tRNA(His) + L-histidine + ATP = L-histidyl-tRNA(His) + AMP + diphosphate + H(+). The protein is Histidine--tRNA ligase of Vibrio parahaemolyticus serotype O3:K6 (strain RIMD 2210633).